A 201-amino-acid polypeptide reads, in one-letter code: Small ribosomal subunit protein uS4c (201 aa).

The region spanning 91 to 153 is the S4 RNA-binding domain; it reads MRLDNIVFRL…NASKKIVETN (63 aa).

It belongs to the universal ribosomal protein uS4 family. As to quaternary structure, part of the 30S ribosomal subunit. Contacts protein S5. The interaction surface between S4 and S5 is involved in control of translational fidelity.

The protein localises to the plastid. It localises to the cyanelle. One of the primary rRNA binding proteins, it binds directly to 16S rRNA where it nucleates assembly of the body of the 30S subunit. Functionally, with S5 and S12 plays an important role in translational accuracy. The protein is Small ribosomal subunit protein uS4c (rps4) of Cyanophora paradoxa.